A 264-amino-acid chain; its full sequence is Probable transcriptional regulatory protein PPA1157 (264 aa).

This sequence belongs to the TACO1 family.

Its subcellular location is the cytoplasm. The chain is Probable transcriptional regulatory protein PPA1157 from Cutibacterium acnes (strain DSM 16379 / KPA171202) (Propionibacterium acnes).